Consider the following 198-residue polypeptide: Peptidyl-tRNA hydrolase (198 aa).

Y18 is a tRNA binding site. The active-site Proton acceptor is the H23. TRNA is bound by residues F69, N71, and N117.

This sequence belongs to the PTH family. As to quaternary structure, monomer.

The protein localises to the cytoplasm. It catalyses the reaction an N-acyl-L-alpha-aminoacyl-tRNA + H2O = an N-acyl-L-amino acid + a tRNA + H(+). In terms of biological role, hydrolyzes ribosome-free peptidyl-tRNAs (with 1 or more amino acids incorporated), which drop off the ribosome during protein synthesis, or as a result of ribosome stalling. Its function is as follows. Catalyzes the release of premature peptidyl moieties from peptidyl-tRNA molecules trapped in stalled 50S ribosomal subunits, and thus maintains levels of free tRNAs and 50S ribosomes. This Idiomarina loihiensis (strain ATCC BAA-735 / DSM 15497 / L2-TR) protein is Peptidyl-tRNA hydrolase.